A 1021-amino-acid polypeptide reads, in one-letter code: INO80 complex subunit D (1021 aa).

Lys87 participates in a covalent cross-link: Glycyl lysine isopeptide (Lys-Gly) (interchain with G-Cter in SUMO2). A Phosphoserine modification is found at Ser132. 5 disordered regions span residues 194 to 239, 514 to 570, 808 to 844, 911 to 940, and 976 to 1021; these read FSTP…PMQG, RGDN…SMPT, RQQY…PHTS, SLST…SVLP, and QLSS…PSPN. Residues 224–239 are compositionally biased toward polar residues; it reads VCKSPQPQNTSLPMQG. Positions 520-554 are enriched in basic residues; it reads KVQHQQQRKPRKKTKPPALTKKHKKKRRRGPRRPQ. The segment covering 911 to 926 has biased composition (low complexity); that stretch reads SLSTPPTTSNSETTQP. Polar residues predominate over residues 931–940; that stretch reads VTPSSSSVLP. Residues 995-1014 show a composition bias toward low complexity; the sequence is APPTGFTATGATATSTNNAS.

The protein belongs to the INO80D family. In terms of assembly, component of the chromatin remodeling INO80 complex; specifically part of a complex module associated with the N-terminus of INO80.

The protein resides in the nucleus. In terms of biological role, putative regulatory component of the chromatin remodeling INO80 complex which is involved in transcriptional regulation, DNA replication and probably DNA repair. This Mus musculus (Mouse) protein is INO80 complex subunit D.